Here is a 180-residue protein sequence, read N- to C-terminus: Ribulose bisphosphate carboxylase small subunit, chloroplastic 2 (180 aa).

A chloroplast-targeting transit peptide spans 1–54; the sequence is MASMMSNAAVVGRTTPAQASMVAPFTGLKSVSAFPVTKKSNDITSIASNGGRVQ.

It belongs to the RuBisCO small chain family. As to quaternary structure, heterohexadecamer of 8 large and 8 small subunits.

It localises to the plastid. The protein resides in the chloroplast. Its function is as follows. RuBisCO catalyzes two reactions: the carboxylation of D-ribulose 1,5-bisphosphate, the primary event in carbon dioxide fixation, as well as the oxidative fragmentation of the pentose substrate. Both reactions occur simultaneously and in competition at the same active site. Although the small subunit is not catalytic it is essential for maximal activity. This chain is Ribulose bisphosphate carboxylase small subunit, chloroplastic 2, found in Mesembryanthemum crystallinum (Common ice plant).